A 311-amino-acid chain; its full sequence is MLRITVKTLQQRASFHHSFKHISVPDLHTRAQNDQTNCYCQEINARLPSKTDPLDPHIKLPHRTPNYNKHVLLLSPGDRFAQPWKVAWNHNLDTNTNRPYNAISKLRSHLGGSPGILINAAHLQNEFIPRPKQHDEWLYFFVIPDMKLYVIKETDIEEFASFLDEGAIQAPKLSFQDYLSGKAKASQQVHEVHHRKLTRFQGETFLRDWNLVCGHYKRDAKCGEMGPDIIAAFQDEKLFPENNLALISHIGGHIFAGNVIFYKLFGREKMQNKLDSLWFGKVYPHNLKLLCENLENGKIIDEMYRGGISMN.

Belongs to the AIM32 family.

This Saccharomyces cerevisiae (strain RM11-1a) (Baker's yeast) protein is Altered inheritance of mitochondria protein 32 (AIM32).